The sequence spans 59 residues: Embryonic testis differentiation protein homolog A (59 aa).

A compositionally biased stretch (basic and acidic residues) spans 1 to 10 (MDKEVPKGSP). A disordered region spans residues 1-25 (MDKEVPKGSPREPALNIKKSDKSFK).

In Homo sapiens (Human), this protein is Embryonic testis differentiation protein homolog A.